The chain runs to 283 residues: Protease HtpX (283 aa).

Transmembrane regions (helical) follow at residues 4 to 24 (ILLF…ILSV) and 33 to 53 (GGIL…SLFL). His-139 provides a ligand contact to Zn(2+). Residue Glu-140 is part of the active site. Zn(2+) is bound at residue His-143. 2 helical membrane-spanning segments follow: residues 147–167 (GDMV…IFLS) and 190–210 (IYFL…SIIA). Glu-218 contributes to the Zn(2+) binding site.

The protein belongs to the peptidase M48B family. Zn(2+) serves as cofactor.

It localises to the cell inner membrane. This chain is Protease HtpX, found in Haemophilus influenzae (strain PittEE).